The chain runs to 872 residues: Alanine--tRNA ligase (872 aa).

Positions 567, 571, 669, and 673 each coordinate Zn(2+).

It belongs to the class-II aminoacyl-tRNA synthetase family. The cofactor is Zn(2+).

It is found in the cytoplasm. It catalyses the reaction tRNA(Ala) + L-alanine + ATP = L-alanyl-tRNA(Ala) + AMP + diphosphate. Catalyzes the attachment of alanine to tRNA(Ala) in a two-step reaction: alanine is first activated by ATP to form Ala-AMP and then transferred to the acceptor end of tRNA(Ala). Also edits incorrectly charged Ser-tRNA(Ala) and Gly-tRNA(Ala) via its editing domain. This is Alanine--tRNA ligase from Streptococcus pyogenes serotype M1.